The primary structure comprises 432 residues: Adenylosuccinate synthetase (432 aa).

GTP is bound by residues 12-18 and 40-42; these read GDEGKGK and GHT. Asp-13 (proton acceptor) is an active-site residue. The Mg(2+) site is built by Asp-13 and Gly-40. Residues 13–16, 38–41, Thr-130, Arg-144, Gln-226, Thr-241, and Arg-305 contribute to the IMP site; these read DEGK and NAGH. Catalysis depends on His-41, which acts as the Proton donor. Position 301-307 (301-307) interacts with substrate; it reads STTGRSR. GTP contacts are provided by residues Arg-307, 333–335, and 415–417; these read KLD and SVG.

Belongs to the adenylosuccinate synthetase family. In terms of assembly, homodimer. Requires Mg(2+) as cofactor.

It localises to the cytoplasm. It carries out the reaction IMP + L-aspartate + GTP = N(6)-(1,2-dicarboxyethyl)-AMP + GDP + phosphate + 2 H(+). It participates in purine metabolism; AMP biosynthesis via de novo pathway; AMP from IMP: step 1/2. Functionally, plays an important role in the de novo pathway of purine nucleotide biosynthesis. Catalyzes the first committed step in the biosynthesis of AMP from IMP. The chain is Adenylosuccinate synthetase from Bdellovibrio bacteriovorus (strain ATCC 15356 / DSM 50701 / NCIMB 9529 / HD100).